The chain runs to 162 residues: Flagellar assembly factor FliW (162 aa).

This sequence belongs to the FliW family. As to quaternary structure, interacts with translational regulator CsrA and flagellin(s).

Its subcellular location is the cytoplasm. In terms of biological role, acts as an anti-CsrA protein, binds CsrA and prevents it from repressing translation of its target genes, one of which is flagellin. Binds to flagellin and participates in the assembly of the flagellum. This chain is Flagellar assembly factor FliW, found in Magnetococcus marinus (strain ATCC BAA-1437 / JCM 17883 / MC-1).